The chain runs to 431 residues: Histidinol dehydrogenase (431 aa).

NAD(+)-binding residues include Y130, Q191, and N214. Residues S237, Q261, and H264 each coordinate substrate. Positions 261 and 264 each coordinate Zn(2+). Active-site proton acceptor residues include E329 and H330. Residues H330, D363, E417, and H422 each contribute to the substrate site. D363 provides a ligand contact to Zn(2+). H422 provides a ligand contact to Zn(2+).

It belongs to the histidinol dehydrogenase family. Zn(2+) serves as cofactor.

The catalysed reaction is L-histidinol + 2 NAD(+) + H2O = L-histidine + 2 NADH + 3 H(+). It functions in the pathway amino-acid biosynthesis; L-histidine biosynthesis; L-histidine from 5-phospho-alpha-D-ribose 1-diphosphate: step 9/9. Catalyzes the sequential NAD-dependent oxidations of L-histidinol to L-histidinaldehyde and then to L-histidine. This is Histidinol dehydrogenase from Psychrobacter arcticus (strain DSM 17307 / VKM B-2377 / 273-4).